Here is a 495-residue protein sequence, read N- to C-terminus: Keratin, type II cuticular 87 (495 aa).

A head region spans residues 1–111 (MSCFSSRLGA…PNAQCVKHEE (111 aa)). The 312-residue stretch at 111–422 (EKEQIKCLNS…RLLEGEEQRL (312 aa)) folds into the IF rod domain. Residues 112–146 (KEQIKCLNSKFAAFIDKVRFLEQQNKLLETKWQFY) are coil 1A. The interval 147–156 (QNRKCCESNM) is linker 1. The coil 1B stretch occupies residues 157–257 (EPLFEGYIEA…YEEETRLLHS (101 aa)). Residues 258-274 (HISDTSVVVKMDNSRDL) are linker 12. The tract at residues 275–418 (NMDCVVAEIK…ITYRRLLEGE (144 aa)) is coil 2. The tail stretch occupies residues 419-494 (EQRLCEGVGS…TCGSSRSVRF (76 aa)).

Belongs to the intermediate filament family. As to quaternary structure, heterotetramer of two type I and two type II keratins.

The chain is Keratin, type II cuticular 87 from Mus musculus (Mouse).